The primary structure comprises 550 residues: MSPTISHKDSSRQRRSGMFSHALDMKSGPLPPGGWDDSRRDSVGGEGDREVLLGDAGPGDLPKAPRSYRSELSSILLLLFLYVLQGIPLGLAGSIPLILQSKNVSYTDQAFFSFVFWPFSLKLLWAPLVDAVYFKNFGRRKSWLVPTQYTLGIFMIYLSTQVDRLLGNIDGRTPDVVALTVTFFLFEFLAATQDIAVDGWALTMLSRENVGYASTCNSVGQTAGYFLGNVLFLALESADFCNKYLRFQPQPRGIVTLSDFLFFWGTVFLITTTLVALLKKENREASIVKEETQGITDTYKLLFSIIKMPAVLAFCLLILTSKIGFSAADAVTGLKLVEEGVPKEHLALLAVPMVPLQIILPLLISKYTAGPQPLNIFYKAMPYRLLLGLEYALLVWWTPKVEHQGGFPLYYYIIVLLSYALHQVTLYSMYVSIMAFNAKVSDPLIGGTYMTLLNTVSNLGGNWPSTVALWLVDPLTVKECVGASNQNCRTPDAIELCKKLGGSCVTALDGYYVESIICVLIGFGWWFFLGPKFKKLQDEGPSSWKCKRNN.

Basic and acidic residues-rich tracts occupy residues M1 to R12 and D36 to L52. Residues M1–P58 are disordered. The Cytoplasmic portion of the chain corresponds to M1–S74. A Phosphoserine modification is found at S42. A helical transmembrane segment spans residues I75 to I95. Over P96 to S113 the chain is Extracellular. N103 carries an N-linked (GlcNAc...) asparagine glycan. A helical transmembrane segment spans residues F114–F134. Topologically, residues K135–K141 are cytoplasmic. Residues S142–V162 traverse the membrane as a helical segment. Residues D163–D175 lie on the Extracellular side of the membrane. The helical transmembrane segment at V176–A196 threads the bilayer. At V197 to N217 the chain is on the cytoplasmic side. Residues S218–A238 traverse the membrane as a helical segment. The Extracellular portion of the chain corresponds to D239–T256. The helical transmembrane segment at L257–L277 threads the bilayer. Residues L278–K300 lie on the Cytoplasmic side of the membrane. A helical transmembrane segment spans residues L301 to S321. At K322–E344 the chain is on the extracellular side. The helical transmembrane segment at H345–S365 threads the bilayer. Over K366 to N375 the chain is Cytoplasmic. A helical transmembrane segment spans residues I376–W396. Topologically, residues W397 to G405 are extracellular. Residues G406 to L426 traverse the membrane as a helical segment. Residues Y427–D509 are Cytoplasmic-facing. A helical transmembrane segment spans residues G510–G530. Residues P531–N550 lie on the Extracellular side of the membrane.

Belongs to the SLC33A transporter family. As to quaternary structure, homodimerizes. Expressed in all adult tissues examined including brain, heart, kidney, liver and spleen, with maximum expression in liver and kidney.

The protein resides in the endoplasmic reticulum membrane. The catalysed reaction is acetyl-CoA(in) = acetyl-CoA(out). Acetyl-CoA transporter that mediates active acetyl-CoA import through the endoplasmic reticulum (ER) membrane into the ER lumen where specific ER-based acetyl-CoA:lysine acetyltransferases are responsible for the acetylation of ER-based protein substrate, such as BACE1. Necessary for O-acetylation of gangliosides. In Mus musculus (Mouse), this protein is Acetyl-coenzyme A transporter 1 (Slc33a1).